The sequence spans 173 residues: Pyridoxal 5'-phosphate synthase subunit PdxT (173 aa).

Position 49–51 (49–51 (GES)) interacts with L-glutamine. Cysteine 81 acts as the Nucleophile in catalysis. Residues arginine 113 and 141 to 142 (IR) each bind L-glutamine.

The protein belongs to the glutaminase PdxT/SNO family. As to quaternary structure, in the presence of PdxS, forms a dodecamer of heterodimers. Only shows activity in the heterodimer.

The catalysed reaction is aldehydo-D-ribose 5-phosphate + D-glyceraldehyde 3-phosphate + L-glutamine = pyridoxal 5'-phosphate + L-glutamate + phosphate + 3 H2O + H(+). It catalyses the reaction L-glutamine + H2O = L-glutamate + NH4(+). The protein operates within cofactor biosynthesis; pyridoxal 5'-phosphate biosynthesis. Catalyzes the hydrolysis of glutamine to glutamate and ammonia as part of the biosynthesis of pyridoxal 5'-phosphate. The resulting ammonia molecule is channeled to the active site of PdxS. This chain is Pyridoxal 5'-phosphate synthase subunit PdxT, found in Mycolicibacterium paratuberculosis (strain ATCC BAA-968 / K-10) (Mycobacterium paratuberculosis).